A 516-amino-acid polypeptide reads, in one-letter code: Probable fucosyltransferase 8 (516 aa).

The chain crosses the membrane as a helical; Signal-anchor for type II membrane protein span at residues 5-25 (ITVVTCLFLLSVMQLSFFNIF). Topologically, residues 26 to 516 (NYQLLDATTN…ITGLKLVDSN (491 aa)) are lumenal. 5 N-linked (GlcNAc...) asparagine glycosylation sites follow: Asn-35, Asn-116, Asn-211, Asn-362, and Asn-463.

The protein belongs to the glycosyltransferase 37 family. Expressed in leaves and stems.

It localises to the golgi apparatus. Its subcellular location is the golgi stack membrane. It participates in protein modification; protein glycosylation. May be involved in cell wall biosynthesis. May act as a fucosyltransferase. This is Probable fucosyltransferase 8 (FUT8) from Arabidopsis thaliana (Mouse-ear cress).